We begin with the raw amino-acid sequence, 1504 residues long: MLEINDFSAIRISLASPEDILSWSHGEVTKPETINYRTLKPERDGLFCERIFGPTKDWECYCGKYKRVRYKGVVCDKCGVEVTRSKVRRERMGHISLASPVSHIWFVKGTPSRLGLLLDISPRNLERVLYFASYMIVHVDEELKAQAREALQAEYREKRERIQQEAESKQIELSTQLTQDLGGMESAQITTQRRIEEEYRRLRDEISAEAERLRSDLEEKQGEAAEEDILFRGTVLIEEGEIITEKTLDALDELLDQELETLEQRKQRDLEDAEQLTGAERERKEYEASQERERLQERLQSELDRLVREEKERLEQIDSIKLKRILSEQEYRALREIAPGVFRADMGAGAVRDMIVRTIDLDKLAEELQNEVYTTQGQRRKKATKRLRVVEAFRKSGNRPEWMILTVLPVIPPDLRPMVQLDGGRFATSDLNDLYRRVINRNNRLKRLMELNAPEIIVRNEKRMLQEAVDALIDNGRRGRAVSGKGKHRLKSLSDMLKGKQGRFRQNLLGKRVDYSGRSVIVVGPDLKLHQCGLPKKMALELFKPFVMRRLVEKGFAHNIKSAKRIVERVRPEVWDVLEEVIKDYLVLLNRAPSLHRLSIQAFEAKLIEGSAIQLHPLVCAAFNADFDGDQMAVHVPLSRKAQEEARMRMLSKYNLLSPATGDPIITPSQDIVLGCYYLTMVKDGAKGSGKMFASIDEALLAYDKGLIDIQAPIFVRMTGTVYGESDRPVRMLSPDENGAPRMLLETTIGRIIFNNELLEPLRFRNRLIAKKGLREIIADCYKYYTNLNNLTEADLDTIRAMYGDRPRDDLARYFGSEMTASQADRIKTLGFRYATRGGMTIGVDDIEIPPKKQDILAEAEKRVTEVERQFRRGLITEEERYREIVEIWQNATKQTTEAVKQHLNPFGPVAMMVNSAARGNINQLSQMAGMRGLMSDPTGRIIELPIKSNFREGLSVLEYFVSTHGGRKGLADTALRTADAGYLTRRLIDVAQDNIVTIDDCGTDEGLWIYRADDREVLQDFEQRILGRLLAAPLVDPRTGEILANRNDEIDEALVRKCKELAIDAVYVRSPLACKADYGICRMCYGRNLATGKLVDIGEAVGIIAAQSIGEPGTQLTLRTFHTGGVASADDITQGLPRVQEIFEARTPKGKAILAEIDGIVELVREDEVRKIRVVATELYTDDHELPPHYEPVVADGAQVNEGDVLAQSNRADLNGEPIVARIAGVVRIGAGQISVINEEREVREVVAPHTARLAPGIENGARVVAGQHLTEGSADPQELLALQGREAVQRYLVNEAQKVYRSQGVDINDKHIEVIVRQMLRRVRIEEPGDTDYLPGELIDSTEFVRKNAEIISQGGEPATASTMLLGITKASLTTDSFLAAASFQETTRVLTEAAITGKVDYLRGLKENVVIGKLIPAGTGIEKRRQLAEEIIGELANVAPATSTAVVEQERPDREADEALRRRLRALIGGDGDDGERNNGDFDDQVGEDVVIPPDDDDQEA.

The Zn(2+) site is built by cysteine 60, cysteine 62, cysteine 75, and cysteine 78. The interval 265–294 is disordered; the sequence is RKQRDLEDAEQLTGAERERKEYEASQERER. A compositionally biased stretch (basic and acidic residues) spans 279-294; the sequence is AERERKEYEASQERER. Residues aspartate 626, aspartate 628, and aspartate 630 each coordinate Mg(2+). Cysteine 1002, cysteine 1075, cysteine 1082, and cysteine 1085 together coordinate Zn(2+). The interval 1468-1504 is disordered; the sequence is RALIGGDGDDGERNNGDFDDQVGEDVVIPPDDDDQEA.

Belongs to the RNA polymerase beta' chain family. In terms of assembly, the RNAP catalytic core consists of 2 alpha, 1 beta, 1 beta' and 1 omega subunit. When a sigma factor is associated with the core the holoenzyme is formed, which can initiate transcription. Mg(2+) serves as cofactor. Requires Zn(2+) as cofactor.

It carries out the reaction RNA(n) + a ribonucleoside 5'-triphosphate = RNA(n+1) + diphosphate. DNA-dependent RNA polymerase catalyzes the transcription of DNA into RNA using the four ribonucleoside triphosphates as substrates. This chain is DNA-directed RNA polymerase subunit beta', found in Roseiflexus sp. (strain RS-1).